The primary structure comprises 224 residues: UPF0173 metal-dependent hydrolase Ta0764 (224 aa).

Belongs to the UPF0173 family.

The sequence is that of UPF0173 metal-dependent hydrolase Ta0764 from Thermoplasma acidophilum (strain ATCC 25905 / DSM 1728 / JCM 9062 / NBRC 15155 / AMRC-C165).